The following is a 251-amino-acid chain: Triosephosphate isomerase (251 aa).

9-11 (NWK) lines the substrate pocket. Residue His95 is the Electrophile of the active site. Glu167 acts as the Proton acceptor in catalysis. Substrate is bound by residues Gly173, Ser213, and 234 to 235 (GG). Ser213 carries the phosphoserine modification.

The protein belongs to the triosephosphate isomerase family. In terms of assembly, homodimer.

It localises to the cytoplasm. It carries out the reaction D-glyceraldehyde 3-phosphate = dihydroxyacetone phosphate. Its pathway is carbohydrate biosynthesis; gluconeogenesis. The protein operates within carbohydrate degradation; glycolysis; D-glyceraldehyde 3-phosphate from glycerone phosphate: step 1/1. Its function is as follows. Involved in the gluconeogenesis. Catalyzes stereospecifically the conversion of dihydroxyacetone phosphate (DHAP) to D-glyceraldehyde-3-phosphate (G3P). In Bacillus cereus (strain AH820), this protein is Triosephosphate isomerase.